Here is a 568-residue protein sequence, read N- to C-terminus: 2-succinyl-5-enolpyruvyl-6-hydroxy-3-cyclohexene-1-carboxylate synthase (568 aa).

It belongs to the TPP enzyme family. MenD subfamily. In terms of assembly, homodimer. It depends on Mg(2+) as a cofactor. Mn(2+) serves as cofactor. Thiamine diphosphate is required as a cofactor.

The catalysed reaction is isochorismate + 2-oxoglutarate + H(+) = 5-enolpyruvoyl-6-hydroxy-2-succinyl-cyclohex-3-ene-1-carboxylate + CO2. The protein operates within quinol/quinone metabolism; 1,4-dihydroxy-2-naphthoate biosynthesis; 1,4-dihydroxy-2-naphthoate from chorismate: step 2/7. Its pathway is quinol/quinone metabolism; menaquinone biosynthesis. In terms of biological role, catalyzes the thiamine diphosphate-dependent decarboxylation of 2-oxoglutarate and the subsequent addition of the resulting succinic semialdehyde-thiamine pyrophosphate anion to isochorismate to yield 2-succinyl-5-enolpyruvyl-6-hydroxy-3-cyclohexene-1-carboxylate (SEPHCHC). This Mannheimia succiniciproducens (strain KCTC 0769BP / MBEL55E) protein is 2-succinyl-5-enolpyruvyl-6-hydroxy-3-cyclohexene-1-carboxylate synthase.